The following is a 106-amino-acid chain: Biogenesis of lysosome-related organelles complex 1 subunit 6 (106 aa).

The tract at residues 78–106 is disordered; that stretch reads KKTSQLELSDTNIEDGSTTSTPTTTNKSQ. Over residues 82–93 the composition is skewed to polar residues; that stretch reads QLELSDTNIEDG. A compositionally biased stretch (low complexity) spans 94-106; it reads STTSTPTTTNKSQ.

This sequence belongs to the BLOC1S6 family. Homodimer (isoform 1). Component of the biogenesis of lysosome-related organelles complex-1 (BLOC-1) composed at least of blos-1, blos-2, blos-4, dsbn-1, glo-2, mutd-1 and snpn-1. Isoform 1 interacts with blos-1 and blos-4.

The protein localises to the cytoplasm. The protein resides in the endosome. Component of the biogenesis of lysosome-related organelles complex-1 (BLOC-1) involved in gut granule biogenesis. This Caenorhabditis elegans protein is Biogenesis of lysosome-related organelles complex 1 subunit 6 (glo-2).